The following is a 395-amino-acid chain: Transcription termination/antitermination protein NusA (395 aa).

One can recognise an S1 motif domain in the interval asparagine 137–serine 201. KH domains are found at residues serine 243–leucine 291 and lysine 331–glutamate 378.

Belongs to the NusA family. Monomer. Binds directly to the core enzyme of the DNA-dependent RNA polymerase and to nascent RNA.

The protein localises to the cytoplasm. Its function is as follows. Participates in both transcription termination and antitermination. In Helicobacter pylori (strain ATCC 700392 / 26695) (Campylobacter pylori), this protein is Transcription termination/antitermination protein NusA.